A 499-amino-acid polypeptide reads, in one-letter code: Ethanolamine-phosphate phospho-lyase (499 aa).

K278 carries the post-translational modification N6-(pyridoxal phosphate)lysine.

The protein belongs to the class-III pyridoxal-phosphate-dependent aminotransferase family. Homotetramer. It depends on pyridoxal 5'-phosphate as a cofactor.

Its subcellular location is the mitochondrion. The enzyme catalyses phosphoethanolamine + H2O = acetaldehyde + NH4(+) + phosphate. Functionally, catalyzes the pyridoxal-phosphate-dependent breakdown of phosphoethanolamine, converting it to ammonia, inorganic phosphate and acetaldehyde. The polypeptide is Ethanolamine-phosphate phospho-lyase (Etnppl) (Mus musculus (Mouse)).